We begin with the raw amino-acid sequence, 142 residues long: Large ribosomal subunit protein uL11 (142 aa).

It belongs to the universal ribosomal protein uL11 family. Part of the ribosomal stalk of the 50S ribosomal subunit. Interacts with L10 and the large rRNA to form the base of the stalk. L10 forms an elongated spine to which L12 dimers bind in a sequential fashion forming a multimeric L10(L12)X complex. Post-translationally, one or more lysine residues are methylated.

Its function is as follows. Forms part of the ribosomal stalk which helps the ribosome interact with GTP-bound translation factors. This is Large ribosomal subunit protein uL11 from Haemophilus influenzae (strain PittGG).